Reading from the N-terminus, the 303-residue chain is N-acetylmuramic acid 6-phosphate etherase (303 aa).

Positions Ile-61–Lys-224 constitute an SIS domain. Glu-89 acts as the Proton donor in catalysis. Glu-120 is an active-site residue.

The protein belongs to the GCKR-like family. MurNAc-6-P etherase subfamily. Homodimer.

It carries out the reaction N-acetyl-D-muramate 6-phosphate + H2O = N-acetyl-D-glucosamine 6-phosphate + (R)-lactate. Its pathway is amino-sugar metabolism; 1,6-anhydro-N-acetylmuramate degradation. It functions in the pathway amino-sugar metabolism; N-acetylmuramate degradation. The protein operates within cell wall biogenesis; peptidoglycan recycling. In terms of biological role, specifically catalyzes the cleavage of the D-lactyl ether substituent of MurNAc 6-phosphate, producing GlcNAc 6-phosphate and D-lactate. Together with AnmK, is also required for the utilization of anhydro-N-acetylmuramic acid (anhMurNAc) either imported from the medium or derived from its own cell wall murein, and thus plays a role in cell wall recycling. The polypeptide is N-acetylmuramic acid 6-phosphate etherase (murQ) (Haemophilus influenzae (strain ATCC 51907 / DSM 11121 / KW20 / Rd)).